A 336-amino-acid chain; its full sequence is Isopentenyl-diphosphate delta-isomerase (336 aa).

5–6 (RK) is a substrate binding site. Residues 60–62 (AMT), Ser90, and Asn117 each bind FMN. Substrate is bound at residue Gln147. Glu148 is a binding site for Mg(2+). FMN-binding positions include Lys179, Ser204, Thr209, 253 to 255 (GVR), and 274 to 275 (SR).

This sequence belongs to the IPP isomerase type 2 family. Homooctamer. Dimer of tetramers. It depends on FMN as a cofactor. NADPH is required as a cofactor. The cofactor is Mg(2+).

It is found in the cytoplasm. The catalysed reaction is isopentenyl diphosphate = dimethylallyl diphosphate. In terms of biological role, involved in the biosynthesis of isoprenoids. Catalyzes the 1,3-allylic rearrangement of the homoallylic substrate isopentenyl (IPP) to its allylic isomer, dimethylallyl diphosphate (DMAPP). In Streptococcus pneumoniae serotype 4 (strain ATCC BAA-334 / TIGR4), this protein is Isopentenyl-diphosphate delta-isomerase.